A 431-amino-acid polypeptide reads, in one-letter code: Histidine--tRNA ligase (431 aa).

This sequence belongs to the class-II aminoacyl-tRNA synthetase family. Homodimer.

The protein localises to the cytoplasm. It carries out the reaction tRNA(His) + L-histidine + ATP = L-histidyl-tRNA(His) + AMP + diphosphate + H(+). The sequence is that of Histidine--tRNA ligase from Neisseria meningitidis serogroup B (strain ATCC BAA-335 / MC58).